Consider the following 287-residue polypeptide: Pyridoxal kinase PdxY (287 aa).

Substrate is bound by residues serine 9 and 44–45 (MQ). Aspartate 111, alanine 142, glutamate 147, and lysine 180 together coordinate ATP. A substrate-binding site is contributed by aspartate 221.

Belongs to the pyridoxine kinase family. PdxY subfamily. In terms of assembly, homodimer. Mg(2+) is required as a cofactor.

It carries out the reaction pyridoxal + ATP = pyridoxal 5'-phosphate + ADP + H(+). Its pathway is cofactor metabolism; pyridoxal 5'-phosphate salvage; pyridoxal 5'-phosphate from pyridoxal: step 1/1. In terms of biological role, pyridoxal kinase involved in the salvage pathway of pyridoxal 5'-phosphate (PLP). Catalyzes the phosphorylation of pyridoxal to PLP. The polypeptide is Pyridoxal kinase PdxY (Burkholderia pseudomallei (strain K96243)).